A 945-amino-acid chain; its full sequence is Collagen-like protein 1 (945 aa).

Disordered regions lie at residues Ser-80 to Leu-226 and Gly-257 to Glu-441. Collagen-like domains follow at residues Gly-83–Lys-142 and Gly-146–Lys-205. Basic and acidic residues-rich tracts occupy residues Gln-109–Gln-145 and Asp-168–Lys-208. N-linked (GlcNAc...) asparagine; by host glycosylation occurs at Asn-211. 5 Collagen-like domains span residues Gly-257–Lys-376, Gly-383–Asn-442, Gly-488–Lys-547, Gly-554–Val-613, and Gly-635–Ser-694. N-linked (GlcNAc...) asparagine; by host glycosylation occurs at Asn-442. The span at Gly-488–Asp-687 shows a compositional bias: basic and acidic residues. A disordered region spans residues Gly-488 to Ser-712. The segment covering Ser-703 to Ser-712 has biased composition (polar residues). An N-linked (GlcNAc...) asparagine; by host glycan is attached at Asn-716. Residues Thr-733–Ser-768 form a disordered region. Positions Lys-736–Thr-754 are enriched in basic and acidic residues. Low complexity predominate over residues Asp-756–Thr-765.

In terms of processing, may be hydroxylated on lysine by the viral-encoded procollagen-lysine,2-oxoglutarate 5-dioxygenase.

The protein resides in the virion. May participate in the formation of a layer of cross-linked glycosylated fibrils at the viral surface thus giving it a hairy-like appearance. The chain is Collagen-like protein 1 from Acanthamoeba polyphaga mimivirus (APMV).